The sequence spans 212 residues: Anaphase-promoting complex subunit 10 (212 aa).

The DOC domain occupies 12–196 (MDEEERTSSR…PSAVLEARPG (185 aa)).

This sequence belongs to the APC10 family. In terms of assembly, the APC/C complex is probably composed of at least 12 subunits: apc-2, apc-10, apc-11, cdc-26, emb-1, emb-27, emb-30, mat-1, mat-2, mat-3, such-1 and gfi-3.

The protein operates within protein modification; protein ubiquitination. Probable component of the anaphase promoting complex/cyclosome (APC/C), a cell cycle-regulated E3 ubiquitin ligase that controls progression through mitosis and the G1 phase of the cell cycle. The APC/C complex acts by mediating ubiquitination and subsequent degradation of target proteins. The protein is Anaphase-promoting complex subunit 10 of Caenorhabditis elegans.